Here is a 274-residue protein sequence, read N- to C-terminus: Dermonecrotic toxin SaSicTox-betaIIB1 (274 aa).

H5 is a catalytic residue. E25 and D27 together coordinate Mg(2+). H41 functions as the Nucleophile in the catalytic mechanism. Cystine bridges form between C45/C51 and C47/C190. D85 contacts Mg(2+).

Belongs to the arthropod phospholipase D family. Class II subfamily. Mg(2+) serves as cofactor. Expressed by the venom gland.

The protein resides in the secreted. It carries out the reaction an N-(acyl)-sphingosylphosphocholine = an N-(acyl)-sphingosyl-1,3-cyclic phosphate + choline. It catalyses the reaction an N-(acyl)-sphingosylphosphoethanolamine = an N-(acyl)-sphingosyl-1,3-cyclic phosphate + ethanolamine. The catalysed reaction is a 1-acyl-sn-glycero-3-phosphocholine = a 1-acyl-sn-glycero-2,3-cyclic phosphate + choline. The enzyme catalyses a 1-acyl-sn-glycero-3-phosphoethanolamine = a 1-acyl-sn-glycero-2,3-cyclic phosphate + ethanolamine. In terms of biological role, dermonecrotic toxins cleave the phosphodiester linkage between the phosphate and headgroup of certain phospholipids (sphingolipid and lysolipid substrates), forming an alcohol (often choline) and a cyclic phosphate. This toxin acts on sphingomyelin (SM). It may also act on ceramide phosphoethanolamine (CPE), lysophosphatidylcholine (LPC) and lysophosphatidylethanolamine (LPE), but not on lysophosphatidylserine (LPS), and lysophosphatidylglycerol (LPG). It acts by transphosphatidylation, releasing exclusively cyclic phosphate products as second products. Induces dermonecrosis, hemolysis, increased vascular permeability, edema, inflammatory response, and platelet aggregation. The protein is Dermonecrotic toxin SaSicTox-betaIIB1 of Sicarius albospinosus (Six-eyed crab spider).